A 371-amino-acid polypeptide reads, in one-letter code: Transposase for insertion sequence element IS421 (371 aa).

It belongs to the transposase 11 family.

Its function is as follows. Involved in the transposition of the insertion sequence IS421. This Escherichia coli protein is Transposase for insertion sequence element IS421.